Reading from the N-terminus, the 357-residue chain is N-acetyl-gamma-glutamyl-phosphate reductase (357 aa).

The active site involves cysteine 160.

This sequence belongs to the NAGSA dehydrogenase family. Type 1 subfamily.

It localises to the cytoplasm. The enzyme catalyses N-acetyl-L-glutamate 5-semialdehyde + phosphate + NADP(+) = N-acetyl-L-glutamyl 5-phosphate + NADPH + H(+). The protein operates within amino-acid biosynthesis; L-arginine biosynthesis; N(2)-acetyl-L-ornithine from L-glutamate: step 3/4. Its function is as follows. Catalyzes the NADPH-dependent reduction of N-acetyl-5-glutamyl phosphate to yield N-acetyl-L-glutamate 5-semialdehyde. In Parasynechococcus marenigrum (strain WH8102), this protein is N-acetyl-gamma-glutamyl-phosphate reductase.